The primary structure comprises 470 residues: Aminoacyl transferase sphA (470 aa).

Positions 212, 244, and 272 each coordinate pyridoxal 5'-phosphate. Lys275 is subject to N6-(pyridoxal phosphate)lysine.

It belongs to the class-II pyridoxal-phosphate-dependent aminotransferase family. BioF subfamily. In terms of assembly, homodimer. Requires pyridoxal 5'-phosphate as cofactor.

The enzyme catalyses aminomalonate + (3R)-hydroxyoctadeca-4,10-dienoyl-[ACP] = 3-oxopresphingofungin + holo-[ACP] + CO2. The protein operates within secondary metabolite biosynthesis. Aminoacyl transferase; part of the gene cluster that mediates the biosynthesis of sphingofungins, bioactive molecules acting as sphingolipid inhibitors via inhibiting serine palmitoyl transferase (SPT). Within the pathway, sphA transfers aminomalonate onto the sphB product 3-hydroxyoctadeca-4,10-dienoyl-ACP to produce 3-keto-presphingofungin. The substrate specificity of sphA using only aminomalonate in Aspergillus fumigatus is responsible for the biosynthesis of sphingofungins B and C but not E and F like in Byssochlamys spectabilis. The PKS sphB does not contain any putative thioesterase domain for releasing the nascent polyketide chain and it has been suggested that aminoacyl transferases can facilitate the polyketide chain release. Sphingofungin biosynthesis starts with the PKS sphB that produces an C18 polyketide precursor 3-hydroxyoctadeca-4,10-dienoyl-ACP containing one delta-6 desaturation and one delta-12 desaturation. The aminoacyl transferase sphA uses the sphB product to produce 3-keto-presphingofungin by adding an aminomalonate molecule. SphF then reduces the C-3 ketone of 3-keto-presphingofungin which leads to presphingofungin. The cytochrome P450 monooxygenase sphH converts presphingofungin into sphingofungin B1 which is further converted to sphingofungin B by the dioxygenase sphC. SphC is also able to convert presphingofungin into sphingofungin B2. The acetyltransferase sphE acetylates sphingofungin B to produce sphingofungin C, but can also convert sphingofungin B1 into sphingofungin C1 and sphingofungin B2 into sphingofungin C2. Finally, sphingofungin C can be spontaneously converted into sphingofungin D. This Aspergillus fumigatus (strain CBS 144.89 / FGSC A1163 / CEA10) (Neosartorya fumigata) protein is Aminoacyl transferase sphA.